Here is an 86-residue protein sequence, read N- to C-terminus: Colicin-E2 immunity protein (86 aa).

The protein belongs to the colicins ColE2/ColE8/ColE9 and pyocins S1/S2 family.

Its function is as follows. This protein is able to protect a cell, which harbors the plasmid ColE2 encoding colicin E2, against colicin E2. The sequence is that of Colicin-E2 immunity protein (imm) from Escherichia coli.